The primary structure comprises 480 residues: Glycogen synthase (480 aa).

K15 provides a ligand contact to ADP-alpha-D-glucose.

This sequence belongs to the glycosyltransferase 1 family. Bacterial/plant glycogen synthase subfamily.

It carries out the reaction [(1-&gt;4)-alpha-D-glucosyl](n) + ADP-alpha-D-glucose = [(1-&gt;4)-alpha-D-glucosyl](n+1) + ADP + H(+). Its pathway is glycan biosynthesis; glycogen biosynthesis. Its function is as follows. Synthesizes alpha-1,4-glucan chains using ADP-glucose. The polypeptide is Glycogen synthase (Opitutus terrae (strain DSM 11246 / JCM 15787 / PB90-1)).